A 128-amino-acid chain; its full sequence is Sulfurtransferase TusD (128 aa).

The Cysteine persulfide intermediate role is filled by Cys78.

Belongs to the DsrE/TusD family. As to quaternary structure, heterohexamer, formed by a dimer of trimers. The hexameric TusBCD complex contains 2 copies each of TusB, TusC and TusD. The TusBCD complex interacts with TusE.

It is found in the cytoplasm. Its function is as follows. Part of a sulfur-relay system required for 2-thiolation of 5-methylaminomethyl-2-thiouridine (mnm(5)s(2)U) at tRNA wobble positions. Accepts sulfur from TusA and transfers it in turn to TusE. The chain is Sulfurtransferase TusD from Shigella flexneri serotype 5b (strain 8401).